A 303-amino-acid polypeptide reads, in one-letter code: Fe-S cluster assembly protein DRE2 (303 aa).

An N-terminal SAM-like domain region spans residues 1-125 (MTHSRTALVL…WQKRAVTASA (125 aa)). Residues 126–188 (PVKLAPRQPV…GDAPIAENDL (63 aa)) form a linker region. [2Fe-2S] cluster is bound by residues Cys202, Cys213, Cys216, and Cys218. The segment at 202–218 (CGRTQTRRRKACKDCTC) is fe-S binding site A. [4Fe-4S] cluster-binding residues include Cys266, Cys269, Cys277, and Cys280. Short sequence motifs (cx2C motif) lie at residues 266 to 269 (CGSC) and 277 to 280 (CSGC). Residues 266–280 (CGSCSLGDAFRCSGC) form a fe-S binding site B region.

Belongs to the anamorsin family. Monomer. Interacts with TAH18. Interacts with MIA40. It depends on [2Fe-2S] cluster as a cofactor. [4Fe-4S] cluster is required as a cofactor.

It is found in the cytoplasm. It localises to the mitochondrion intermembrane space. Functionally, component of the cytosolic iron-sulfur (Fe-S) protein assembly (CIA) machinery required for the maturation of extramitochondrial Fe-S proteins. Part of an electron transfer chain functioning in an early step of cytosolic Fe-S biogenesis, facilitating the de novo assembly of a [4Fe-4S] cluster on the scaffold complex CFD1-NBP35. Electrons are transferred to DRE2 from NADPH via the FAD- and FMN-containing protein TAH18. TAH18-DRE2 are also required for the assembly of the diferric tyrosyl radical cofactor of ribonucleotide reductase (RNR), probably by providing electrons for reduction during radical cofactor maturation in the catalytic small subunit RNR2. The sequence is that of Fe-S cluster assembly protein DRE2 from Eremothecium gossypii (strain ATCC 10895 / CBS 109.51 / FGSC 9923 / NRRL Y-1056) (Yeast).